Consider the following 397-residue polypeptide: Enoyl-[acyl-carrier-protein] reductase [NADH] (397 aa).

NAD(+)-binding positions include 48–53 (GASTGY), 74–75 (FE), 111–112 (DA), and 139–140 (VA). Tyrosine 225 lines the substrate pocket. Tyrosine 235 (proton donor) is an active-site residue. NAD(+) contacts are provided by residues lysine 244 and 273-275 (VVT).

This sequence belongs to the TER reductase family. Monomer.

It carries out the reaction a 2,3-saturated acyl-[ACP] + NAD(+) = a (2E)-enoyl-[ACP] + NADH + H(+). It participates in lipid metabolism; fatty acid biosynthesis. Involved in the final reduction of the elongation cycle of fatty acid synthesis (FAS II). Catalyzes the reduction of a carbon-carbon double bond in an enoyl moiety that is covalently linked to an acyl carrier protein (ACP). The protein is Enoyl-[acyl-carrier-protein] reductase [NADH] of Burkholderia mallei (strain SAVP1).